Here is a 742-residue protein sequence, read N- to C-terminus: MPTPSAQLDQGIISSNGGTSGVSASSTRFRHRKISVKQKLRVYKASDLKDLDQDELQQRELQEIETGVEKNEEREVHLHKILQKNQLQLQDLYIPTPDASRVWKEFDEMYQGRFTTPASYIQFSVQLEDCCGPAYNMDERDEAYLAELNGGESEALTEDEFELLMTNFESAIRERQPFLAMDPESLLMYEDLKPTMLKNDIGDAGLKTELAAELQLGDQPFVTKFDSPATLRTRNMVELIEKYGAEVYEYWKKRKVEVAGGSIIPSLKAERSTDKDDNDPYFCFRRREVRQTRKTRRVDTQNSQKLRLLYQQLQYTKELALLVAKREKMSMDMLLRDREIFQLRCDIKTVKRGLGIKGEDELLISQKRRKLVSNVITNKKYVSTQADAAALRRLRVAKVKDKKLLSKQLSSTDLKRQQSQLQKLDQQQRQQQQQQQPQINGAQCQQDGSGVSHVYVKLPTSKIPDIVLEDVDKVLSMKERNTKRFVEEKMKKRREEDGDIFFNLTDDPYNPVFEITIPQNISPTNAPFSSIVSSNFEISRSYYTPNLQNCITGNTNSVLAYNKEGEIVESQKYKKIEFYSPFEEKNDSHTREIPVRFRRRLGRYGVEYIDRKDVSRNPSDLLGEFMDFSLIAEQEQSSDAVNVYDSQLDELFRLHDKWKYDSDHNAYGIKFSDEPSRLNQISNETQVIRFGTMLGTKSYEQLREATLKYRQNVMAQRKKLVNAQRQQQQQQQEQQEQEHQQA.

Positions 1–27 are enriched in polar residues; that stretch reads MPTPSAQLDQGIISSNGGTSGVSASST. 3 disordered regions span residues 1-28, 416-446, and 718-742; these read MPTP…SSTR, RQQS…QCQQ, and KKLV…HQQA. The segment covering 724–734 has biased composition (low complexity); sequence QRQQQQQQQEQ.

Belongs to the enhancer of polycomb family. As to quaternary structure, component of the NuA4 histone acetyltransferase complex.

The protein resides in the nucleus. Functionally, component of the NuA4 histone acetyltransferase complex which is involved in transcriptional activation of selected genes principally by acetylation of nucleosomal histone H4 and H2A. The NuA4 complex is also involved in DNA repair. Involved in gene silencing by neighboring heterochromatin, blockage of the silencing spreading along the chromosome, and required for cell cycle progression through G2/M. This is Enhancer of polycomb-like protein 1 (EPL1) from Eremothecium gossypii (strain ATCC 10895 / CBS 109.51 / FGSC 9923 / NRRL Y-1056) (Yeast).